Reading from the N-terminus, the 128-residue chain is Ribonuclease P protein component (128 aa).

Belongs to the RnpA family. In terms of assembly, consists of a catalytic RNA component (M1 or rnpB) and a protein subunit.

The catalysed reaction is Endonucleolytic cleavage of RNA, removing 5'-extranucleotides from tRNA precursor.. Functionally, RNaseP catalyzes the removal of the 5'-leader sequence from pre-tRNA to produce the mature 5'-terminus. It can also cleave other RNA substrates such as 4.5S RNA. The protein component plays an auxiliary but essential role in vivo by binding to the 5'-leader sequence and broadening the substrate specificity of the ribozyme. The sequence is that of Ribonuclease P protein component from Prochlorococcus marinus (strain NATL2A).